A 682-amino-acid chain; its full sequence is Glutamine--fructose-6-phosphate aminotransferase [isomerizing] 2 (682 aa).

C2 functions as the For GATase activity in the catalytic mechanism. In terms of domain architecture, Glutamine amidotransferase type-2 spans 2–288; sequence CGIFAYMNYR…DDDIAAVADG (287 aa). S244 bears the Phosphoserine mark. 2 SIS domains span residues 360–499 and 531–672; these read HLKE…DRIS and LALE…VDFP. Residues 377 to 378, 422 to 424, T427, and H578 each bind substrate; these read TS and SQS.

In terms of tissue distribution, highest levels of expression in heart, placenta, and spinal cord.

It catalyses the reaction D-fructose 6-phosphate + L-glutamine = D-glucosamine 6-phosphate + L-glutamate. It participates in nucleotide-sugar biosynthesis; UDP-N-acetyl-alpha-D-glucosamine biosynthesis; alpha-D-glucosamine 6-phosphate from D-fructose 6-phosphate: step 1/1. Its function is as follows. Controls the flux of glucose into the hexosamine pathway. Most likely involved in regulating the availability of precursors for N- and O-linked glycosylation of proteins. This Homo sapiens (Human) protein is Glutamine--fructose-6-phosphate aminotransferase [isomerizing] 2 (GFPT2).